Here is a 1075-residue protein sequence, read N- to C-terminus: Carbamoyl phosphate synthase large chain (1075 aa).

Residues 2–403 (PKRTDIKSIL…SLQKALRGLE (402 aa)) form a carboxyphosphate synthetic domain region. Residues Arg-129, Arg-169, Gly-175, Gly-176, Glu-208, Leu-210, Glu-215, Gly-241, Ile-242, His-243, Gln-285, and Glu-299 each contribute to the ATP site. The region spanning 133 to 328 (DIAMKKIGLD…IAKVAAKLAV (196 aa)) is the ATP-grasp 1 domain. Residues Gln-285, Glu-299, and Asn-301 each coordinate Mg(2+). Mn(2+) contacts are provided by Gln-285, Glu-299, and Asn-301. Residues 404–553 (VGATGFDPKV…YSTYEDECEA (150 aa)) form an oligomerization domain region. Positions 554-936 (NPSIDRDKIM…AFAKAQLGSN (383 aa)) are carbamoyl phosphate synthetic domain. The ATP-grasp 2 domain maps to 679 to 870 (QHAVDRLKLK…LAKVAARVMA (192 aa)). Residues Arg-715, Arg-754, Leu-756, Glu-761, Gly-786, Val-787, His-788, Ser-789, Gln-829, and Glu-841 each contribute to the ATP site. Residues Gln-829, Glu-841, and Asn-843 each contribute to the Mg(2+) site. The Mn(2+) site is built by Gln-829, Glu-841, and Asn-843. Residues 937 to 1075 (STMKKQGRAL…QEMHAQIKKS (139 aa)) form the MGS-like domain. An allosteric domain region spans residues 937-1075 (STMKKQGRAL…QEMHAQIKKS (139 aa)).

This sequence belongs to the CarB family. As to quaternary structure, composed of two chains; the small (or glutamine) chain promotes the hydrolysis of glutamine to ammonia, which is used by the large (or ammonia) chain to synthesize carbamoyl phosphate. Tetramer of heterodimers (alpha,beta)4. It depends on Mg(2+) as a cofactor. Mn(2+) serves as cofactor.

The catalysed reaction is hydrogencarbonate + L-glutamine + 2 ATP + H2O = carbamoyl phosphate + L-glutamate + 2 ADP + phosphate + 2 H(+). It carries out the reaction hydrogencarbonate + NH4(+) + 2 ATP = carbamoyl phosphate + 2 ADP + phosphate + 2 H(+). The protein operates within amino-acid biosynthesis; L-arginine biosynthesis; carbamoyl phosphate from bicarbonate: step 1/1. It participates in pyrimidine metabolism; UMP biosynthesis via de novo pathway; (S)-dihydroorotate from bicarbonate: step 1/3. Functionally, large subunit of the glutamine-dependent carbamoyl phosphate synthetase (CPSase). CPSase catalyzes the formation of carbamoyl phosphate from the ammonia moiety of glutamine, carbonate, and phosphate donated by ATP, constituting the first step of 2 biosynthetic pathways, one leading to arginine and/or urea and the other to pyrimidine nucleotides. The large subunit (synthetase) binds the substrates ammonia (free or transferred from glutamine from the small subunit), hydrogencarbonate and ATP and carries out an ATP-coupled ligase reaction, activating hydrogencarbonate by forming carboxy phosphate which reacts with ammonia to form carbamoyl phosphate. This is Carbamoyl phosphate synthase large chain from Salmonella typhimurium (strain LT2 / SGSC1412 / ATCC 700720).